A 299-amino-acid polypeptide reads, in one-letter code: Coenzyme PQQ synthesis protein B (299 aa).

It belongs to the PqqB family.

The protein operates within cofactor biosynthesis; pyrroloquinoline quinone biosynthesis. Functionally, may be involved in the transport of PQQ or its precursor to the periplasm. This Xanthomonas euvesicatoria pv. vesicatoria (strain 85-10) (Xanthomonas campestris pv. vesicatoria) protein is Coenzyme PQQ synthesis protein B.